Reading from the N-terminus, the 673-residue chain is UvrABC system protein B (673 aa).

Positions 26–414 constitute a Helicase ATP-binding domain; it reads EGLEDGLAHQ…GGDVVDQVVR (389 aa). Residue 39–46 coordinates ATP; it reads GVTGSGKT. A Beta-hairpin motif is present at residues 92-115; it reads YYDYYQPEAYVPSSDTFIEKDASV. Residues 431–597 form the Helicase C-terminal domain; sequence QVDDLLSEIR…GLNKKVVDIL (167 aa). In terms of domain architecture, UVR spans 633–668; it reads QQKIHELEGLMMQHAQNLEFEEAAQIRDQLHQLREL.

Belongs to the UvrB family. As to quaternary structure, forms a heterotetramer with UvrA during the search for lesions. Interacts with UvrC in an incision complex.

It localises to the cytoplasm. Functionally, the UvrABC repair system catalyzes the recognition and processing of DNA lesions. A damage recognition complex composed of 2 UvrA and 2 UvrB subunits scans DNA for abnormalities. Upon binding of the UvrA(2)B(2) complex to a putative damaged site, the DNA wraps around one UvrB monomer. DNA wrap is dependent on ATP binding by UvrB and probably causes local melting of the DNA helix, facilitating insertion of UvrB beta-hairpin between the DNA strands. Then UvrB probes one DNA strand for the presence of a lesion. If a lesion is found the UvrA subunits dissociate and the UvrB-DNA preincision complex is formed. This complex is subsequently bound by UvrC and the second UvrB is released. If no lesion is found, the DNA wraps around the other UvrB subunit that will check the other stand for damage. This is UvrABC system protein B from Shigella flexneri.